Consider the following 261-residue polypeptide: MRILITNDDGINAPGLEVLEGIARDLAGPDGEVWTVAPAFEQSGVSHAISYTHPMMIAKLAPRRYAAEGSPADCVLAALYDVLQGARPDLVLSGVNRGNNSAENVLYSGTVGGALEAALQGLPAIALSQFLGPETEGLADPFEGARTHGARIVRLLLEKGLWDDGDYRLFYNVNFPPKPAAGVRGQRVAAQGFRRDTSFGVEPHMSPSGRRFLWIRGGAQHSPTLPGTDAAVNLDGYISITPMRADLTAHDRLAELEALIG.

A divalent metal cation is bound by residues D8, D9, S43, and N96.

Belongs to the SurE nucleotidase family. It depends on a divalent metal cation as a cofactor.

The protein localises to the cytoplasm. The enzyme catalyses a ribonucleoside 5'-phosphate + H2O = a ribonucleoside + phosphate. Nucleotidase that shows phosphatase activity on nucleoside 5'-monophosphates. The polypeptide is 5'-nucleotidase SurE (Cereibacter sphaeroides (strain ATCC 17025 / ATH 2.4.3) (Rhodobacter sphaeroides)).